Here is a 1253-residue protein sequence, read N- to C-terminus: Cytoplasmic FMR1-interacting protein 2 (1253 aa).

It belongs to the CYFIP family.

The protein localises to the cytoplasm. In terms of biological role, involved in T-cell adhesion and p53-dependent induction of apoptosis. Does not bind RNA. The polypeptide is Cytoplasmic FMR1-interacting protein 2 (cyfip2) (Xenopus laevis (African clawed frog)).